Consider the following 291-residue polypeptide: NAD kinase (291 aa).

D55 serves as the catalytic Proton acceptor. NAD(+) is bound by residues 55 to 56 (DG), R60, 130 to 131 (NE), D160, and 171 to 176 (TAYAFS).

It belongs to the NAD kinase family. The cofactor is a divalent metal cation.

The protein resides in the cytoplasm. It catalyses the reaction NAD(+) + ATP = ADP + NADP(+) + H(+). Functionally, involved in the regulation of the intracellular balance of NAD and NADP, and is a key enzyme in the biosynthesis of NADP. Catalyzes specifically the phosphorylation on 2'-hydroxyl of the adenosine moiety of NAD to yield NADP. The polypeptide is NAD kinase (Corynebacterium glutamicum (strain ATCC 13032 / DSM 20300 / JCM 1318 / BCRC 11384 / CCUG 27702 / LMG 3730 / NBRC 12168 / NCIMB 10025 / NRRL B-2784 / 534)).